The primary structure comprises 492 residues: MTDLTSLTLAEARDGLAKKSFTALQLTDAHLAAIEAARVLNAYVLETPEQARAMAKAADERIARGAAGPLEGLPLGIKDLFATQGVRTTACSKILGEFSPPYESTVSAQLWRDGAVLLGKLNNDEFAMGSSNETSCFGPVVNPWRREGSDAKLVPGGSSGGSASAVAAGLCLGATATDTGGSIRQPAAFTGTVGIKPTYGRCSRWGIVAFASSLDQAGPIARTVRDAAILLRSMAGHDPKDTTSVDRAVPDYEAAIGRSVKGMKIGIPKEYRIDGMPAEIEALWKQGADWLKAAGAELVEVSLPHTKYALPAYYIVAPAEASSNLARYDGVRYGARVNGRNIVEMYENTRAAGFGAEVKRRIMIGTYVLSAGYYDAYYLRAQKVRTLIKRDFEECFAKGVSAILTPATPSAAFGIGEKGGADPVEMYLNDIFTVTVNMAGLPGIAVPAGKDAQGLPLGLQLIGRPFDEDTLFSLGEVIEQAAGRFTPTKWWA.

Active-site charge relay system residues include Lys-78 and Ser-158. Ser-182 serves as the catalytic Acyl-ester intermediate.

It belongs to the amidase family. GatA subfamily. Heterotrimer of A, B and C subunits.

The enzyme catalyses L-glutamyl-tRNA(Gln) + L-glutamine + ATP + H2O = L-glutaminyl-tRNA(Gln) + L-glutamate + ADP + phosphate + H(+). Allows the formation of correctly charged Gln-tRNA(Gln) through the transamidation of misacylated Glu-tRNA(Gln) in organisms which lack glutaminyl-tRNA synthetase. The reaction takes place in the presence of glutamine and ATP through an activated gamma-phospho-Glu-tRNA(Gln). This is Glutamyl-tRNA(Gln) amidotransferase subunit A from Rhodopseudomonas palustris (strain BisA53).